Consider the following 72-residue polypeptide: Conotoxin LiC53 (72 aa).

The signal sequence occupies residues 1 to 23; that stretch reads MEKLTSLLLVAALLMLTQTLIQG. A propeptide spanning residues 24–41 is cleaved from the precursor; sequence GGEDRPNKKFLQKIKSTA. Intrachain disulfides connect C45–C59, C52–C63, and C58–C68.

Belongs to the conotoxin O2 superfamily. Expressed by the venom duct.

Its subcellular location is the secreted. The polypeptide is Conotoxin LiC53 (Conus lividus (Livid cone)).